We begin with the raw amino-acid sequence, 1373 residues long: DNA-directed RNA polymerase subunit beta'' (1373 aa).

Zn(2+) contacts are provided by Cys220, Cys293, Cys300, and Cys303.

It belongs to the RNA polymerase beta' chain family. RpoC2 subfamily. In plastids the minimal PEP RNA polymerase catalytic core is composed of four subunits: alpha, beta, beta', and beta''. When a (nuclear-encoded) sigma factor is associated with the core the holoenzyme is formed, which can initiate transcription. Zn(2+) is required as a cofactor.

It is found in the plastid. It localises to the chloroplast. It carries out the reaction RNA(n) + a ribonucleoside 5'-triphosphate = RNA(n+1) + diphosphate. In terms of biological role, DNA-dependent RNA polymerase catalyzes the transcription of DNA into RNA using the four ribonucleoside triphosphates as substrates. The chain is DNA-directed RNA polymerase subunit beta'' from Lepidium virginicum (Virginia pepperweed).